Consider the following 837-residue polypeptide: Protein translocase subunit SecA (837 aa).

Residues glutamine 85, 103-107 (GEGKT), and aspartate 493 each bind ATP. Zn(2+)-binding residues include cysteine 821, cysteine 823, cysteine 832, and histidine 833.

Belongs to the SecA family. Monomer and homodimer. Part of the essential Sec protein translocation apparatus which comprises SecA, SecYEG and auxiliary proteins SecDF. Other proteins may also be involved. Zn(2+) is required as a cofactor.

The protein resides in the cell membrane. The protein localises to the cytoplasm. It carries out the reaction ATP + H2O + cellular proteinSide 1 = ADP + phosphate + cellular proteinSide 2.. Its function is as follows. Part of the Sec protein translocase complex. Interacts with the SecYEG preprotein conducting channel. Has a central role in coupling the hydrolysis of ATP to the transfer of proteins into and across the cell membrane, serving as an ATP-driven molecular motor driving the stepwise translocation of polypeptide chains across the membrane. In Streptococcus pneumoniae (strain ATCC BAA-255 / R6), this protein is Protein translocase subunit SecA.